A 140-amino-acid polypeptide reads, in one-letter code: 3-hydroxyacyl-[acyl-carrier-protein] dehydratase FabZ (140 aa).

The active site involves His-47.

It belongs to the thioester dehydratase family. FabZ subfamily.

It localises to the cytoplasm. The catalysed reaction is a (3R)-hydroxyacyl-[ACP] = a (2E)-enoyl-[ACP] + H2O. Its function is as follows. Involved in unsaturated fatty acids biosynthesis. Catalyzes the dehydration of short chain beta-hydroxyacyl-ACPs and long chain saturated and unsaturated beta-hydroxyacyl-ACPs. The sequence is that of 3-hydroxyacyl-[acyl-carrier-protein] dehydratase FabZ from Streptococcus suis (strain 98HAH33).